Here is an 865-residue protein sequence, read N- to C-terminus: General transcription factor 3C polypeptide 5 (865 aa).

Disordered stretches follow at residues 1 to 21, 111 to 163, 191 to 215, 391 to 522, and 669 to 865; these read MNDETNKNNSNINNNNNNNNS, RPNK…NEKF, NNNTKSESDNVNDSSSSSSSKTVPI, QDNH…NKEG, and DNKM…EESE. Composition is skewed to low complexity over residues 7–21, 115–126, 140–158, 199–210, and 401–411; these read KNNSNINNNNNNNNS, QQTQTQTQTQTQ, QSPKTTSRSKQQQQQQQPQ, DNVNDSSSSSSS, and SKNNNNNNNNK. Composition is skewed to basic and acidic residues over residues 412–439 and 448–489; these read DSIKNKEKDNSNKEDKEHKEDKEDKQEE and NNEK…KGDD. Low complexity-rich tracts occupy residues 508-521 and 677-696; these read EGNNNNNNNNNNKE and RSNTSTATTTSTKSTQPKST. 3 stretches are compositionally biased toward basic and acidic residues: residues 697 to 713, 757 to 766, and 773 to 786; these read QPKEPKLKSTQPKEPRP, QNKEIDESLK, and MEKDNEYLHGKNEE. Acidic residues-rich tracts occupy residues 800–820 and 839–865; these read DYDDDDDDEDKPFELLDDFDG and EDSEEDESDFDEEEEEEEEDFEFEESE.

It belongs to the TFIIIC subunit 5 family. In terms of assembly, part of the TFIIIC complex.

The protein resides in the nucleus. Involved in RNA polymerase III-mediated transcription. Integral, tightly associated component of the DNA-binding TFIIIC2 subcomplex that directly binds tRNA and virus-associated RNA promoters. In Dictyostelium discoideum (Social amoeba), this protein is General transcription factor 3C polypeptide 5 (gtf3c5).